A 378-amino-acid polypeptide reads, in one-letter code: Uroporphyrinogen decarboxylase (378 aa).

Residues R40–R44, D90, Y167, S222, and H355 contribute to the substrate site.

Belongs to the uroporphyrinogen decarboxylase family. Homodimer.

The protein localises to the cytoplasm. The enzyme catalyses uroporphyrinogen III + 4 H(+) = coproporphyrinogen III + 4 CO2. It functions in the pathway porphyrin-containing compound metabolism; protoporphyrin-IX biosynthesis; coproporphyrinogen-III from 5-aminolevulinate: step 4/4. Its function is as follows. Catalyzes the decarboxylation of four acetate groups of uroporphyrinogen-III to yield coproporphyrinogen-III. The sequence is that of Uroporphyrinogen decarboxylase from Psychrobacter arcticus (strain DSM 17307 / VKM B-2377 / 273-4).